The following is a 421-amino-acid chain: ATP-dependent RNA helicase RhlB (421 aa).

The Q motif signature appears at 9–37 (QKFSDFALHPKVVEALEKKGFHNCTPIQA). Residues 40–219 (LPLTLAGRDV…FEQMNNAEYI (180 aa)) enclose the Helicase ATP-binding domain. 53-60 (AQTGTGKT) is a binding site for ATP. Positions 165 to 168 (DEAD) match the DEAD box motif. The 146-residue stretch at 245-390 (RLLQTLIEEE…VSKYNPDALM (146 aa)) folds into the Helicase C-terminal domain. The disordered stretch occupies residues 392–421 (DLPKPLRLTRPRTGNGPRRTGAPRNRRRSG). Low complexity predominate over residues 402–414 (PRTGNGPRRTGAP).

It belongs to the DEAD box helicase family. RhlB subfamily. In terms of assembly, component of the RNA degradosome, which is a multiprotein complex involved in RNA processing and mRNA degradation.

The protein resides in the cytoplasm. The catalysed reaction is ATP + H2O = ADP + phosphate + H(+). Its function is as follows. DEAD-box RNA helicase involved in RNA degradation. Has RNA-dependent ATPase activity and unwinds double-stranded RNA. This is ATP-dependent RNA helicase RhlB from Escherichia coli O157:H7.